The following is a 290-amino-acid chain: Porphobilinogen deaminase (290 aa).

The residue at position 237 (cysteine 237) is an S-(dipyrrolylmethanemethyl)cysteine.

It belongs to the HMBS family. In terms of assembly, monomer. Requires dipyrromethane as cofactor.

It carries out the reaction 4 porphobilinogen + H2O = hydroxymethylbilane + 4 NH4(+). It functions in the pathway porphyrin-containing compound metabolism; protoporphyrin-IX biosynthesis; coproporphyrinogen-III from 5-aminolevulinate: step 2/4. Its function is as follows. Tetrapolymerization of the monopyrrole PBG into the hydroxymethylbilane pre-uroporphyrinogen in several discrete steps. The chain is Porphobilinogen deaminase from Clostridium kluyveri (strain NBRC 12016).